Consider the following 527-residue polypeptide: Cytochrome P450 monooxygenase aba2 (527 aa).

A helical membrane pass occupies residues 26 to 46 (TTVAVLVTVALIAQVLWKIFF). Asn-189, Asn-420, and Asn-448 each carry an N-linked (GlcNAc...) asparagine glycan. Heme is bound at residue Cys-460. Asn-464 carries N-linked (GlcNAc...) asparagine glycosylation.

The protein belongs to the cytochrome P450 family. It depends on heme as a cofactor.

The protein localises to the membrane. The protein operates within hormone biosynthesis. Functionally, cytochrome P450 monooxygenase; part of the gene cluster that mediates the biosynthesis of abscisic acid (ABA), a phytohormone that acts antagonistically toward salicylic acid (SA), jasmonic acid (JA) and ethylene (ETH) signaling, to impede plant defense responses. The first step of the pathway catalyzes the reaction from farnesyl diphosphate to alpha-ionylideneethane performed by the alpha-ionylideneethane synthase aba3 via a three-step reaction mechanism involving 2 neutral intermediates, beta-farnesene and allofarnesene. The cytochrome P450 monooxygenase aba1 might then be involved in the conversion of alpha-ionylideneethane to alpha-ionylideneacetic acid. Alpha-ionylideneacetic acid is further converted to abscisic acid in 2 steps involving the cytochrome P450 monooxygenase aba2 and the short-chain dehydrogenase/reductase aba4, via the intermediates 1'-deoxy-ABA or 1',4'-trans-diol-ABA, depending on the order of action of these 2 enzymes. Aba2 is responsible for the hydroxylation of carbon atom C-1' and aba4 might be involved in the oxidation of the C-4' carbon atom. This Botryotinia fuckeliana (strain B05.10) (Noble rot fungus) protein is Cytochrome P450 monooxygenase aba2 (aba2).